Consider the following 87-residue polypeptide: Retinal rod rhodopsin-sensitive cGMP 3',5'-cyclic phosphodiesterase subunit gamma (87 aa).

Position 1 is an N-acetylmethionine (M1). The span at 1–12 (MNLEPPKAEIRS) shows a compositional bias: basic and acidic residues. The interval 1-55 (MNLEPPKAEIRSATRVIGGPVTPRKGPPKFKQRQTRQFKSKPPKKGVQGFGDDIP) is disordered. The span at 26 to 44 (GPPKFKQRQTRQFKSKPPK) shows a compositional bias: basic residues.

The protein belongs to the rod/cone cGMP-PDE gamma subunit family. As to quaternary structure, oligomer composed of two catalytic chains (alpha and beta), an inhibitory chain (gamma) and the delta chain.

It catalyses the reaction 3',5'-cyclic GMP + H2O = GMP + H(+). Participates in processes of transmission and amplification of the visual signal. cGMP-PDEs are the effector molecules in G-protein-mediated phototransduction in vertebrate rods and cones. The protein is Retinal rod rhodopsin-sensitive cGMP 3',5'-cyclic phosphodiesterase subunit gamma (PDE6G) of Canis lupus familiaris (Dog).